Here is a 575-residue protein sequence, read N- to C-terminus: Acyloxyacyl hydrolase (575 aa).

A signal peptide spans 1–23 (MQSPWKILTVAPLFLLLSLQSSA). Positions 24 to 34 (SPANDDQSRPS) are excised as a propeptide. The 82-residue stretch at 37–118 (NGHTCVGCVL…HTLEFCKQNT (82 aa)) folds into the Saposin B-type domain. An important for enzyme activity, localization to cytoplasmic vesicles, and protein stability region spans residues 38–70 (GHTCVGCVLVVSVIEQLAQVHNSTVQASMERLC). 8 cysteine pairs are disulfide-bonded: cysteine 41-cysteine 114, cysteine 44-cysteine 108, cysteine 70-cysteine 83, cysteine 123-cysteine 453, cysteine 160-cysteine 169, cysteine 206-cysteine 230, cysteine 249-cysteine 329, and cysteine 376-cysteine 459. Residue asparagine 59 is glycosylated (N-linked (GlcNAc...) asparagine). A lipopolysaccharide binding region spans residues 173-177 (KLAME). Residues aspartate 184, aspartate 186, aspartate 188, tyrosine 190, aspartate 205, asparagine 207, aspartate 208, aspartate 210, valine 213, aspartate 223, aspartate 227, asparagine 229, asparagine 231, isoleucine 233, and glutamate 245 each contribute to the Ca(2+) site. Asparagine 207 carries N-linked (GlcNAc...) asparagine glycosylation. Serine 263 is a catalytic residue. Residues asparagine 409 and asparagine 466 are each glycosylated (N-linked (GlcNAc...) asparagine).

Heterodimer of the large and small subunits; disulfide-linked. Ca(2+) is required as a cofactor. In terms of processing, cleaved into a large and a small subunit. The small subunit is N-glycosylated.

It localises to the secreted. It is found in the cytoplasmic vesicle. The catalysed reaction is a 3-(acyloxy)acyl derivative of bacterial toxin + H2O = a 3-hydroxyacyl derivative of bacterial toxin + a fatty acid + H(+). With respect to regulation, inhibited by EDTA. Removes the secondary (acyloxyacyl-linked) fatty acyl chains from the lipid A region of bacterial lipopolysaccharides. By breaking down LPS, terminates the host response to bacterial infection and prevents prolonged and damaging inflammatory responses. In peritoneal macrophages, seems to be important for recovery from a state of immune tolerance following infection by Gram-negative bacteria. The sequence is that of Acyloxyacyl hydrolase from Homo sapiens (Human).